Consider the following 407-residue polypeptide: CCCH-type zinc finger protein oma-1 (407 aa).

The disordered stretch occupies residues 1 to 39 (MNVNGENNEKIDEHHLESSLAGVPTLPVSPLDHAKDLSQ). The span at 7-17 (NNEKIDEHHLE) shows a compositional bias: basic and acidic residues. The interval 46-80 (IGDLVTQTANLIAIKKQLLEDIAFNQHIQSMQVRA) is required for taf-4 binding. 2 C3H1-type zinc fingers span residues 112–140 (SYKT…HGEE) and 154–182 (KYKT…HPDH). Thr239 carries the phosphothreonine; by mbk-2 and GSK3 modification. The residue at position 302 (Ser302) is a Phosphoserine; by mbk-2. At Thr339 the chain carries Phosphothreonine; by GSK3.

In terms of assembly, interacts with taf-4 (via C-terminus). Interacts with ifet-1. Component of a ribonucleoprotein particle complex that interacts with cgh-1 and car-1 in an RNA-dependent manner. Association with many proteins is dependent on the presence of RNA. In terms of processing, phosphorylation by mbk-2 and by gsk-3 are required for its rapid degradation following meiosis II. As to expression, exclusively expressed in the hermaphrodite gonad. Expressed prior to oocyte division. Widely distributed throughout gonadal oocytes from the mitotic stage to the developing diakinesis stage. Expressed in sperm.

Its subcellular location is the cytoplasm. The protein localises to the cytoplasmic granule. It localises to the nucleus. Zinc-finger RNA-binding protein that binds to 5'-UA[AU]-3' motifs in the 3'-UTR of maternal mRNAs to suppress translation in oocytes and embryos. Acts as a ribonucleoprotein particle component that may exert part of its function within cytoplasmic foci of unfertilized oocytes. Acts redundantly with oma-2 to control the temporal expression and distribution of maternal proteins and thereby promote meiotic progression, oocyte maturation, fertilization and embryonic development. Recruits the translational repressor ifet-1 to the 3'-UTR of mei-1 and zif-1 to negatively regulate their translation. By suppressing the translation of the E3 ligase zif-1, may in turn play a role in the stabilization of zif-1 targets such as the maternal transcriptional repressor protein pie-1. Following fertilization, sequesters the transcription initiation factor, taf-4, in the cytoplasm, which prevents its nuclear localization and thus allows for transcriptional suppression in early embryos, but not in oocytes. Also, together with oma-2, is involved in P-granule distribution during embryonic development. The polypeptide is CCCH-type zinc finger protein oma-1 (Caenorhabditis elegans).